The sequence spans 128 residues: Head peptide (128 aa).

An N-terminal signal peptide occupies residues Met-1 to Asp-22. Gln-23 carries the post-translational modification Pyrrolidone carboxylic acid. At Pro-26 the chain carries Hydroxyproline; partial. The interval Ser-27–Asn-128 is disordered. Phe-32 carries the phenylalanine amide modification. The propeptide occupies Ser-35–Ala-55. Gln-56 is subject to Pyrrolidone carboxylic acid. Pro-59 carries the post-translational modification Hydroxyproline; partial. Phenylalanine amide is present on Phe-65. A compositionally biased stretch (basic and acidic residues) spans Gly-66 to Ser-78. The propeptide occupies Ser-68–Ala-79. Pyrrolidone carboxylic acid is present on Gln-80. Pro-83 carries the post-translational modification Hydroxyproline; partial. Residue Phe-89 is modified to Phenylalanine amide. Residues Ser-92 to Asn-128 constitute a propeptide that is removed on maturation. Positions Arg-115 to Asn-128 are enriched in basic residues.

This sequence belongs to the NPY family. Expressed in the brain, terminal ganglion, and midgut of adults: numerous neurosecretory cells and midgut endocrine cells. Expression is dynamic depending on reproductive cycle.

The protein resides in the secreted. In terms of biological role, has a role in inhibiting host-seeking behavior during a reproductive cycle. This Aedes aegypti (Yellowfever mosquito) protein is Head peptide.